Reading from the N-terminus, the 317-residue chain is Insulin-like growth factor-binding protein 2 (317 aa).

Positions 1–33 are cleaved as a signal peptide; it reads MQPRLGGPALLLLPPLLLLLLLGAGGGDCGARA. In terms of domain architecture, IGFBP N-terminal spans 35 to 126; the sequence is VLFRCPPCTP…VHGEGTCEKH (92 aa). 6 disulfides stabilise this stretch: cysteine 39–cysteine 76, cysteine 42–cysteine 78, cysteine 50–cysteine 79, cysteine 68–cysteine 82, cysteine 90–cysteine 103, and cysteine 97–cysteine 123. 2 disordered regions span residues 125–151 and 189–218; these read KHGD…GGQV and EQHR…ARTP. The Thyroglobulin type-1 domain maps to 216–298; sequence RTPCQQELDQ…APTIRGDPEC (83 aa). 3 cysteine pairs are disulfide-bonded: cysteine 219–cysteine 253, cysteine 264–cysteine 275, and cysteine 277–cysteine 298. A Cell attachment site motif is present at residues 293 to 295; that stretch reads RGD.

As to quaternary structure, interacts with IGF1. Interacts with IGF2. Interacts (via RGD motif) with integrin alpha5/ITGA5; this interaction induces cell migration, adhesion or apoptosis according to the context. Interacts with PTPRB; this interaction leads to PTPRB dimerization and inactivation. Post-translationally, cleaved by MMP9 leading to release of free IGF2 from IGFBP2-IGF2 complex, which contributes to enhance the motility and the growth of astrocytes. O-glycosylated. Expressed in abundance in selected adult tissues, namely liver, kidney, adrenal, pituitary and choroid plexus.

The protein resides in the secreted. Its function is as follows. Multifunctional protein that plays a critical role in regulating the availability of IGFs such as IGF1 and IGF2 to their receptors and thereby regulates IGF-mediated cellular processes including proliferation, differentiation, and apoptosis in a cell-type specific manner. Functions coordinately with receptor protein tyrosine phosphatase beta/PTPRB and the IGF1 receptor to regulate IGF1-mediated signaling by stimulating the phosphorylation of PTEN leading to its inactivation and AKT1 activation. Plays a positive role in cell migration via interaction with integrin alpha5/ITGA5 through an RGD motif. Additionally, interaction with ITGA5/ITGB1 enhances the adhesion of endothelial progenitor cells to endothelial cells. Upon mitochondrial damage, facilitates apoptosis with ITGA5 of podocytes, and then activates the phosphorylation of focal adhesion kinase (FAK)-mediated mitochondrial injury. This Ovis aries (Sheep) protein is Insulin-like growth factor-binding protein 2 (IGFBP2).